A 333-amino-acid chain; its full sequence is Flotillin-like protein FloA (333 aa).

The helical transmembrane segment at 10–30 (IFLIAGGIIFLVLFFHYVPFF) threads the bilayer.

The protein belongs to the flotillin-like FloA family. Homooligomerizes.

It is found in the cell membrane. It localises to the membrane raft. Functionally, found in functional membrane microdomains (FMM) that may be equivalent to eukaryotic membrane rafts. FMMs are highly dynamic and increase in number as cells age. Flotillins are thought to be important factors in membrane fluidity. The sequence is that of Flotillin-like protein FloA from Bacteroides fragilis (strain ATCC 25285 / DSM 2151 / CCUG 4856 / JCM 11019 / LMG 10263 / NCTC 9343 / Onslow / VPI 2553 / EN-2).